Consider the following 359-residue polypeptide: Spermine synthase (359 aa).

Positions 53–304 (SGWFSEPHPR…GVIGFVLCST (252 aa)) constitute a PABS domain. Position 99 (glutamine 99) interacts with S-adenosyl 3-(methylsulfanyl)propylamine. Tyrosine 129 is a binding site for spermidine. Residue glutamine 130 coordinates S-adenosyl 3-(methylsulfanyl)propylamine. Aspartate 154 serves as a coordination point for spermidine. Residues glutamate 174 and 205–206 (DA) each bind S-adenosyl 3-(methylsulfanyl)propylamine. Aspartate 224 serves as the catalytic Proton acceptor. Residue tyrosine 292 coordinates putrescine.

Belongs to the spermidine/spermine synthase family. In terms of assembly, heterodimer. Component of a multiprotein complex. Interacts with SPDSYN1 and SPDSYN2. As to expression, expressed predominantly in stem internodes, flower buds and roots.

It catalyses the reaction S-adenosyl 3-(methylsulfanyl)propylamine + spermidine = spermine + S-methyl-5'-thioadenosine + H(+). It functions in the pathway amine and polyamine biosynthesis; spermine biosynthesis; spermine from spermidine: step 1/1. In Arabidopsis thaliana (Mouse-ear cress), this protein is Spermine synthase (SPMS).